The sequence spans 701 residues: Elongation factor G 1 (701 aa).

One can recognise a tr-type G domain in the interval 8 to 290 (ERYRNIGISA…AVIDYLPSPL (283 aa)). GTP contacts are provided by residues 17 to 24 (AHIDAGKT), 88 to 92 (DTPGH), and 142 to 145 (NKMD).

Belongs to the TRAFAC class translation factor GTPase superfamily. Classic translation factor GTPase family. EF-G/EF-2 subfamily.

It is found in the cytoplasm. Its function is as follows. Catalyzes the GTP-dependent ribosomal translocation step during translation elongation. During this step, the ribosome changes from the pre-translocational (PRE) to the post-translocational (POST) state as the newly formed A-site-bound peptidyl-tRNA and P-site-bound deacylated tRNA move to the P and E sites, respectively. Catalyzes the coordinated movement of the two tRNA molecules, the mRNA and conformational changes in the ribosome. In Paraburkholderia xenovorans (strain LB400), this protein is Elongation factor G 1.